The following is a 143-amino-acid chain: MAKKKAISWIKLQVPAAQAAPGAKIGQALGPHGVSGPQFVKEFNERTAKMDPGIVVPVIITVYSDKSFSFIVKTPPASILIKKAIGIESGSKKSNTDKVGTISKEKLMEIARIKMSDLNAKSESAAFKIIAGSARSMGVEVEK.

It belongs to the universal ribosomal protein uL11 family. In terms of assembly, part of the ribosomal stalk of the 50S ribosomal subunit. Interacts with L10 and the large rRNA to form the base of the stalk. L10 forms an elongated spine to which L12 dimers bind in a sequential fashion forming a multimeric L10(L12)X complex. Post-translationally, one or more lysine residues are methylated.

In terms of biological role, forms part of the ribosomal stalk which helps the ribosome interact with GTP-bound translation factors. The polypeptide is Large ribosomal subunit protein uL11 (Borreliella burgdorferi (strain ATCC 35210 / DSM 4680 / CIP 102532 / B31) (Borrelia burgdorferi)).